Here is a 235-residue protein sequence, read N- to C-terminus: RAD9, HUS1, RAD1-interacting nuclear orphan protein 1 (235 aa).

At Ser-50 the chain carries Phosphoserine. Residues 54–60 (SWVSPQF) carry the RAD1-binding motif motif. Disordered regions lie at residues 75–106 (HRDQARRPTRRSTCKFPRLTFESPQSSSSETL), 111–130 (RVQPQNSEKDPPRRPLVPLF), and 149–198 (VFAP…LVKD). Residues 96–106 (ESPQSSSSETL) are compositionally biased toward polar residues. The D-box motif lies at 123–130 (RRPLVPLF). The segment covering 161-173 (SVRDDPISPDQKE) has biased composition (basic and acidic residues). The KEN box signature appears at 171–175 (QKENS).

Interacts (when phosphorylated by PLK1) with POLQ; promoting POLQ recruitment to DNA damage sites. Interacts with RAD1; interaction is direct and promotes association with the 9-1-1 (RAD9-RAD1-HUS1) complex. Interacts with RAD18. Interacts with TOPBP1. Interacts with UBE2N. In terms of processing, phosphorylated at Ser-50 by PLK1, promoting interaction with polymerase theta (POLQ). Ubiquitinated and degraded by the APC/C complex upon mitotic exit.

The protein resides in the nucleus. The protein localises to the chromosome. In terms of biological role, involved in microhomology-mediated end-joining (MMEJ) DNA repair by promoting recruitment of polymerase theta (POLQ) to DNA damage sites during mitosis. MMEJ is an alternative non-homologous end-joining (NHEJ) machinery that takes place during mitosis to repair double-strand breaks in DNA that originate in S-phase. Accumulates in M-phase; following phosphorylation by PLK1, interacts with POLQ, enabling its recruitment to double-strand breaks for subsequent repair. Also involved in the DNA damage response (DDR) signaling in response to genotoxic stresses such as ionizing radiation (IR) during the S phase. Recruited to sites of DNA damage through interaction with the 9-1-1 cell-cycle checkpoint response complex and TOPBP1 in a ATR-dependent manner. Required for the progression of the G1 to S phase transition. Plays a role in the stimulation of CHEK1 phosphorylation. This Mus musculus (Mouse) protein is RAD9, HUS1, RAD1-interacting nuclear orphan protein 1 (Rhno1).